Consider the following 178-residue polypeptide: MADGKAGDEKPEKSQRAGAAGGPEEEAEKPVKTKTVSSSNGGESSSRSAEKRSAEEEAADLPTKPTKISKFGFAIGSQTTKKASAISIKLGSSKPKETVPTLAPKTLSVAAAFNEDEDSEPEEMPPEAKMRMKNIGRDTPTSAGPNSFNKGKHGFSDNQKLWERNIKSHLGNVHDQDN.

A compositionally biased stretch (basic and acidic residues) spans 1 to 15; the sequence is MADGKAGDEKPEKSQ. Residues 1–82 are disordered; sequence MADGKAGDEK…FAIGSQTTKK (82 aa). Ala-2 is subject to N-acetylalanine. Positions 37–47 are enriched in low complexity; sequence SSSNGGESSSR. Ser-53 carries the phosphoserine modification. Lys-64 bears the N6-acetyllysine mark. Ser-77, Ser-87, and Ser-119 each carry phosphoserine. The interval 134–178 is disordered; that stretch reads NIGRDTPTSAGPNSFNKGKHGFSDNQKLWERNIKSHLGNVHDQDN. A Phosphothreonine modification is found at Thr-139. Polar residues predominate over residues 139–149; sequence TPTSAGPNSFN. A Phosphoserine modification is found at Ser-147. An N6-acetyllysine mark is found at Lys-150 and Lys-152. Positions 160-178 are enriched in basic and acidic residues; the sequence is KLWERNIKSHLGNVHDQDN.

In terms of assembly, interacts with UHRF2/NIRF. In terms of processing, ubiquitinated; mediated by UHRF2 and leading to its subsequent proteasomal degradation. N-terminally acetylated in a HYPK-dependent manner by the NatA acetyltransferase complex which is composed of NAA10 and NAA15.

Its subcellular location is the nucleus. In terms of biological role, may be involved in cell cycle regulation. The protein is PEST proteolytic signal-containing nuclear protein (PCNP) of Homo sapiens (Human).